The chain runs to 566 residues: MOB kinase activator-like 2 (566 aa).

Disordered stretches follow at residues 28-57 (ADAT…SSLS) and 74-118 (GRAV…GAQA). The span at 35-57 (SSTAPQTPTASTPRPSSSHSSLS) shows a compositional bias: low complexity. The segment covering 85-115 (QNGGKGNASGAGGGAGGGGAGGASGGTGGTG) has biased composition (gly residues). Zn(2+) contacts are provided by Cys-209, Cys-214, His-289, and His-294. Disordered regions lie at residues 346–407 (GGCQ…SASA) and 498–541 (FSNN…QCNA). Residues 367–388 (LQHQSLQQQQQHHNSSSNSTSS) are compositionally biased toward low complexity. Over residues 394-407 (VNSQSNNGSTSASA) the composition is skewed to polar residues. Residues 498–507 (FSNNNNNNHN) are compositionally biased toward low complexity. Basic residues predominate over residues 508 to 526 (LNHHHHHHHHHGHHGHHHA).

Belongs to the MOB1/phocein family. As to quaternary structure, interacts with and activates trc, also interacts with wts.

It localises to the cytoplasm. It is found in the nucleus. Its function is as follows. Required for the normal morphogenesis of a variety of polarized outgrowths including epidermal hairs, bristles, arista laterals, and dendrites. The protein is MOB kinase activator-like 2 (Mob2) of Drosophila melanogaster (Fruit fly).